The following is a 160-amino-acid chain: Transcriptional regulator MraZ (160 aa).

SpoVT-AbrB domains are found at residues 5 to 50 (NFET…DGGY) and 93 to 136 (AVEC…SQAE).

The protein belongs to the MraZ family. In terms of assembly, forms oligomers.

The protein resides in the cytoplasm. The protein localises to the nucleoid. This chain is Transcriptional regulator MraZ, found in Geotalea daltonii (strain DSM 22248 / JCM 15807 / FRC-32) (Geobacter daltonii).